The sequence spans 1142 residues: Coiled-coil domain-containing protein 40 (1142 aa).

2 disordered regions span residues 1–197 and 251–274; these read MAEP…QVLP and PSTE…AEDE. 2 stretches are compositionally biased toward basic and acidic residues: residues 11 to 27 and 35 to 55; these read SHPE…EGNN and PEKD…HPEE. The segment covering 63–96 has biased composition (acidic residues); it reads AIEEGEVETEGEAAVEGEEEAVSYGDAESEEEYY. Position 252 is a phosphoserine (serine 252). Acidic residues predominate over residues 265 to 274; sequence EGSDEEAEDE. Coiled coils occupy residues 293–319, 349–470, 526–627, 684–950, and 1005–1054; these read AALK…ATKQ, HDRH…QAED, QAKS…LRRK, TSSR…LGQL, and VRKA…LTRL.

Belongs to the CCDC40 family.

The protein localises to the cytoplasm. Its subcellular location is the cell projection. The protein resides in the cilium. Its function is as follows. Required for assembly of dynein regulatory complex (DRC) and inner dynein arm (IDA) complexes, which are responsible for ciliary beat regulation, thereby playing a central role in motility in cilia and flagella. Probably acts together with CCDC39 to form a molecular ruler that determines the 96 nanometer (nm) repeat length and arrangements of components in cilia and flagella. Not required for outer dynein arm complexes assembly. Required for axonemal recruitment of CCDC39. The sequence is that of Coiled-coil domain-containing protein 40 from Homo sapiens (Human).